Reading from the N-terminus, the 344-residue chain is Tripartite motif-containing protein 44 (344 aa).

The disordered stretch occupies residues 69 to 165; that stretch reads PPASGDDALP…ETEAESEFDP (97 aa). The span at 88–165 shows a compositional bias: acidic residues; sequence EGEVESEVGE…ETEAESEFDP (78 aa). The segment at 174 to 215 adopts a B box-type zinc-finger fold; the sequence is VAKRKCPDHGLDLSTYCQEDRQLICVLCPVIGAHRGHQLSTL. Cys179, His182, Cys201, and His207 together coordinate Zn(2+). A coiled-coil region spans residues 290–325; it reads AHVTEILADIQSHMDRLMTQMAQAKEQLDTSNESAE. Positions 309–344 are disordered; the sequence is QMAQAKEQLDTSNESAEPKAEGDEEGPSGASEEEDT. Over residues 330 to 344 the composition is skewed to acidic residues; it reads GDEEGPSGASEEEDT. Residues Ser336 and Ser339 each carry the phosphoserine modification.

Interacts (via coiled coil) with TRIM17 (via coiled coil).

Functionally, may play a role in the process of differentiation and maturation of neuronal cells. May regulate the activity of TRIM17. Is a negative regulator of PAX6 expression. The chain is Tripartite motif-containing protein 44 (Trim44) from Rattus norvegicus (Rat).